Consider the following 735-residue polypeptide: MLKLFSAFRKDKIWDFDGGIHPPEMKSQSNGTPLRQVPLAPRFVIPLKQHIGAEGELCVSVGDRVLRGQALTRGRGRMLPVHAPTSGTVIAIAPHSTAHPSALAELSVIIDADGEDRWIEREGWSDYRAHSREALIERIHQYGVAGLGGAGFPTGVKLQGGGDKITTLIINAAECEPYITADDRLMQDCAAQIVEGIRILAHILQPREVLIGIEDNKPQAISMLRAVLADAHDISLRVIPTKYPSGGAKQLTQILTGKQVPHGGRSSDIGVLMQNVGTAYAVKRAVVDGEPITERVVTLTGEAISRPGNVWARLGTPVRHLLNDAGFCPSADQMVIMGGPLMGFTLPWLDVPVVKITNCLLAPSVTEMGAPQEEKSCIRCSACADACPADLLPQQLYWFSKGQQHDKATAHHIADCIECGACAWVCPSNIPLVQYFRQEKAEINAIRLEEKRAAEAKARFEARQARLEREKAARLARHKSAAVQPAAKDQDAIAAALARVKEKQAQATQPVVIQAGSLPDNSAVIAAREARKAQARAKQAAHPMADSAISGDDPRKAAVEAAIARAKARKQEQQAGSEPAEPVDPRKAAVEAAIARAKARKQEQQAGSEPAEPVDPRKAAVEAAIARAKARKQEQQAGSEPAEPVDPRKAAVEAAIARAKARKQEQQAGSEPAEPVDPRKAAVEAAIARAKARKQEQQTVSEPVEPADPRKAAVAAAIARVQAKKAAQQQVVNED.

4Fe-4S ferredoxin-type domains follow at residues Met-368–Tyr-397 and Lys-407–Phe-436. Residues Cys-377, Cys-380, Cys-383, Cys-387, Cys-416, Cys-419, Cys-422, and Cys-426 each contribute to the [4Fe-4S] cluster site. The segment at Gln-534–Lys-711 is disordered.

This sequence belongs to the 4Fe4S bacterial-type ferredoxin family. RnfC subfamily. As to quaternary structure, the complex is composed of six subunits: RsxA, RsxB, RsxC, RsxD, RsxE and RsxG. Requires [4Fe-4S] cluster as cofactor.

It localises to the cell inner membrane. Its function is as follows. Part of a membrane-bound complex that couples electron transfer with translocation of ions across the membrane. Required to maintain the reduced state of SoxR. This is Ion-translocating oxidoreductase complex subunit C from Salmonella paratyphi A (strain ATCC 9150 / SARB42).